The primary structure comprises 294 residues: uncharacterized protein (294 aa).

Disordered regions lie at residues 25-59 and 77-141; these read VQVY…RVRR and LKDD…FEAP. The segment covering 86–139 has biased composition (acidic residues); the sequence is YEELEDDDDDESIEEESDSEFEGESSSDEEESSYDSDSDYDSETEPEDSDDDFE. The stretch at 201–234 forms a coiled coil; that stretch reads IKFYKRNTTFTEEELAEIEEDLLAEVKARYNNMK. Residues 242–259 show a composition bias toward basic and acidic residues; sequence TIETTEDDKKAGEVNKYD. Residues 242 to 294 form a disordered region; it reads TIETTEDDKKAGEVNKYDIDDDFIEKTESDEEEEITEDDSSEQETVVVEPVDE. Residues 260-283 are compositionally biased toward acidic residues; sequence IDDDFIEKTESDEEEEITEDDSSE.

This is an uncharacterized protein from Magallana gigas (Pacific oyster).